The primary structure comprises 281 residues: Microtubule-associated protein RP/EB family member 3 (281 aa).

In terms of domain architecture, Calponin-homology (CH) spans 14–116; it reads NLSRHDMLAW…FIQWFKKFFD (103 aa). The segment at 157 to 181 is disordered; the sequence is VPQRTSPTGPKNMQTSGRLSNVAPP. Positions 158-175 are enriched in polar residues; sequence PQRTSPTGPKNMQTSGRL. A phosphoserine mark is found at Ser-162 and Ser-176. The 71-residue stretch at 194-264 folds into the EB1 C-terminal domain; the sequence is GGHETDAQIL…LYATEEGFAP (71 aa). Residues 217–260 are APC-binding; it reads DGLEKERDFYFSKLRDIELICQEHESENSPVISGIIGILYATEE. The tract at residues 217-281 is DCTN1-binding; the sequence is DGLEKERDFY…EHQQEDQDEY (65 aa). Residues 261–281 form a disordered region; it reads GFAPPEDDEIEEHQQEDQDEY. Residues 272–281 show a composition bias toward basic and acidic residues; that stretch reads EHQQEDQDEY.

The protein belongs to the MAPRE family. As to quaternary structure, homodimer. Heterodimer with MAPRE1. Binds monomeric and polymerized GTP-bound tubulin. Interacts with APC2. Interacts with DCTN1 and SRCIN1. Binds to the C-terminal domain of APC. Interacts (via C-terminus) with CLIP1. Interacts with SLAIN2 and SLAIN1. Interacts with AKAP9. Interacts with PDE4DIP. Interacts with PDE4DIP isoform 13/MMG8/SMYLE; this interaction is required for its recruitment to the Golgi apparatus. In terms of tissue distribution, predominantly expressed in brain and muscle.

Its subcellular location is the cytoplasm. It localises to the cytoskeleton. Its function is as follows. Plus-end tracking protein (+TIP) that binds to the plus-end of microtubules and regulates the dynamics of the microtubule cytoskeleton. Promotes microtubule growth. May be involved in spindle function by stabilizing microtubules and anchoring them at centrosomes. Also acts as a regulator of minus-end microtubule organization: interacts with the complex formed by AKAP9 and PDE4DIP, leading to recruit CAMSAP2 to the Golgi apparatus, thereby tethering non-centrosomal minus-end microtubules to the Golgi, an important step for polarized cell movement. Promotes elongation of CAMSAP2-decorated microtubule stretches on the minus-end of microtubules. The protein is Microtubule-associated protein RP/EB family member 3 (MAPRE3) of Homo sapiens (Human).